The sequence spans 587 residues: Cyclic GMP-AMP synthase-like receptor (587 aa).

2 disordered regions span residues 26–48 (IHPS…RRDD) and 77–229 (TRMH…DRPL). Basic and acidic residues-rich tracts occupy residues 95–138 (TRDR…RDSL), 150–185 (DGAR…RESL), and 204–228 (PESR…HDRP). Glu-307, Asp-309, and Asp-409 together coordinate Mg(2+).

Belongs to the mab-21 family. Mg(2+) serves as cofactor. Mn(2+) is required as a cofactor.

It catalyses the reaction UTP + ATP = 2',3'-cUAMP + 2 diphosphate. Its function is as follows. Nucleotidyltransferase that catalyzes the formation of cyclic UMP-AMP (2',3'-cUAMP) from ATP and UTP and plays a key role in innate immunity. Acts as a key sensor of double-stranded DNA (dsDNA), the presence of dsDNA in the cytoplasm being a danger signal that triggers the immune responses. Directly binds dsDNA, activating the nucleotidyltransferase activity, leading to synthesis of 2',3'-cUAMP, a second messenger that binds to and activates Sting, thereby triggering the immune response via activation of the NF-kappa-B transcription factor. In Magallana gigas (Pacific oyster), this protein is Cyclic GMP-AMP synthase-like receptor.